A 465-amino-acid chain; its full sequence is UDP-N-acetylmuramate--L-alanine ligase (465 aa).

112 to 118 lines the ATP pocket; sequence GTHGKTT.

Belongs to the MurCDEF family.

The protein resides in the cytoplasm. It catalyses the reaction UDP-N-acetyl-alpha-D-muramate + L-alanine + ATP = UDP-N-acetyl-alpha-D-muramoyl-L-alanine + ADP + phosphate + H(+). It functions in the pathway cell wall biogenesis; peptidoglycan biosynthesis. Cell wall formation. The protein is UDP-N-acetylmuramate--L-alanine ligase of Burkholderia thailandensis (strain ATCC 700388 / DSM 13276 / CCUG 48851 / CIP 106301 / E264).